Reading from the N-terminus, the 436-residue chain is Serine hydroxymethyltransferase (436 aa).

(6S)-5,6,7,8-tetrahydrofolate contacts are provided by residues leucine 120 and 124–126 (GHL). At lysine 229 the chain carries N6-(pyridoxal phosphate)lysine.

This sequence belongs to the SHMT family. As to quaternary structure, homodimer. Pyridoxal 5'-phosphate serves as cofactor.

Its subcellular location is the cytoplasm. The enzyme catalyses (6R)-5,10-methylene-5,6,7,8-tetrahydrofolate + glycine + H2O = (6S)-5,6,7,8-tetrahydrofolate + L-serine. It functions in the pathway one-carbon metabolism; tetrahydrofolate interconversion. Its pathway is amino-acid biosynthesis; glycine biosynthesis; glycine from L-serine: step 1/1. In terms of biological role, catalyzes the reversible interconversion of serine and glycine with tetrahydrofolate (THF) serving as the one-carbon carrier. This reaction serves as the major source of one-carbon groups required for the biosynthesis of purines, thymidylate, methionine, and other important biomolecules. Also exhibits THF-independent aldolase activity toward beta-hydroxyamino acids, producing glycine and aldehydes, via a retro-aldol mechanism. This is Serine hydroxymethyltransferase from Roseiflexus castenholzii (strain DSM 13941 / HLO8).